The following is a 282-amino-acid chain: Undecaprenyl-diphosphatase (282 aa).

Helical transmembrane passes span 45–65 (AFME…VVFI), 86–106 (WQLW…GIPL), 114–134 (FHNF…FILI), 151–171 (LPYK…FPGT), 196–216 (FFLG…KFIL), 224–244 (GQLT…MYVI), and 256–276 (FTVF…YWVF).

It belongs to the UppP family.

Its subcellular location is the cell membrane. It carries out the reaction di-trans,octa-cis-undecaprenyl diphosphate + H2O = di-trans,octa-cis-undecaprenyl phosphate + phosphate + H(+). Functionally, catalyzes the dephosphorylation of undecaprenyl diphosphate (UPP). Confers resistance to bacitracin. This is Undecaprenyl-diphosphatase from Streptococcus gordonii (strain Challis / ATCC 35105 / BCRC 15272 / CH1 / DL1 / V288).